We begin with the raw amino-acid sequence, 292 residues long: Homoserine kinase (292 aa).

84-94 (PLARGMGSSSA) contacts ATP.

It belongs to the GHMP kinase family. Homoserine kinase subfamily.

It is found in the cytoplasm. The catalysed reaction is L-homoserine + ATP = O-phospho-L-homoserine + ADP + H(+). It participates in amino-acid biosynthesis; L-threonine biosynthesis; L-threonine from L-aspartate: step 4/5. Functionally, catalyzes the ATP-dependent phosphorylation of L-homoserine to L-homoserine phosphate. This chain is Homoserine kinase, found in Campylobacter lari (strain RM2100 / D67 / ATCC BAA-1060).